Reading from the N-terminus, the 760-residue chain is Probable ATP-dependent RNA helicase DDX27 (760 aa).

The interval 1–50 is disordered; that stretch reads MLAELGFIRTIGENDEVPVEPESDSGDEEEEGPIVLGRKQKALQKNRSAD. Positions 13 to 32 are enriched in acidic residues; that stretch reads ENDEVPVEPESDSGDEEEEG. 3 positions are modified to phosphoserine: Ser23, Ser25, and Ser48. A Required for interaction with the PEBOW complex motif is present at residues 55–57; that stretch reads FVF. Residues 80 to 149 form a disordered region; it reads KRAATTLDEK…TDYSSEDEEI (70 aa). A compositionally biased stretch (basic and acidic residues) spans 98-122; that stretch reads KAEDKEAKSGKVEEKEGQADSDLKG. Over residues 126–148 the composition is skewed to acidic residues; that stretch reads PGEDEAGSKDEDSETDYSSEDEE. A phosphoserine mark is found at Ser133 and Ser144. Residues 157 to 166 carry the Nuclear localization signal motif; that stretch reads KVKEKKKKKK. Positions 184–212 match the Q motif motif; the sequence is LSFQDMNLSRPLLKAITAMGFKQPTPIQK. Residues 215–389 form the Helicase ATP-binding domain; sequence IPVGLLGKDI…SVSLKNPVRI (175 aa). Residue 228-235 participates in ATP binding; that stretch reads AATGTGKT. The short motif at 337-340 is the DEAD box element; sequence DEAD. Residues 419–569 enclose the Helicase C-terminal domain; it reads IVAALLMRTF…DVILKFRDKI (151 aa). 2 disordered regions span residues 605 to 624 and 679 to 760; these read KGKETADQEPERSWFQTKEE and RLAK…KRKK. 2 stretches are compositionally biased toward basic residues: residues 682–691 and 744–760; these read KRNRRTKRAR and RQRRGNFKSKSRYKRKK.

Belongs to the DEAD box helicase family. DDX27/DRS1 subfamily. Associates with PeBoW complex, composed of BOP1, PES1 and WDR12. Interacts directly with BOP1 and PES1.

It is found in the nucleus. The protein localises to the nucleolus. The protein resides in the chromosome. The enzyme catalyses ATP + H2O = ADP + phosphate + H(+). In terms of biological role, probable ATP-dependent RNA helicase. Component of the nucleolar ribosomal RNA (rRNA) processing machinery that regulates 3' end formation of ribosomal 47S rRNA. In Mus musculus (Mouse), this protein is Probable ATP-dependent RNA helicase DDX27 (Ddx27).